The chain runs to 1537 residues: Dicer-like protein 1 (1537 aa).

The segment at 38–68 is disordered; sequence SDPAESSVDVQDEHSSDDSDNENEVFPKQND. Residues 133 to 314 enclose the Helicase ATP-binding domain; that stretch reads LFERAKTQNT…EAATRLETFL (182 aa). 146 to 153 contacts ATP; the sequence is LDTGSGKT. Positions 259–262 match the DEAH box motif; sequence DEAH. The region spanning 459 to 618 is the Helicase C-terminal domain; that stretch reads ELSKHFNDTT…EILPEDRILH (160 aa). A Dicer dsRNA-binding fold domain is found at 651–741; it reads AIAILARYAS…NSIYHRRLPA (91 aa). The PAZ domain occupies 891–1019; that stretch reads DTVSFVHNND…ICAEPLRISA (129 aa). 2 RNase III domains span residues 1043–1202 and 1253–1405; these read IALE…LSGG and ARHV…VDSK. The Mg(2+) site is built by Glu1294, Asp1391, and Glu1394. Residues 1439–1507 form the DRBM domain; sequence TFLHNKLTNE…SEKALAVLDG (69 aa). Zn(2+)-binding residues include Cys1451, His1478, Cys1519, and Cys1521.

This sequence belongs to the helicase family. Dicer subfamily. Mg(2+) is required as a cofactor. Mn(2+) serves as cofactor.

Functionally, dicer-like endonuclease involved in cleaving double-stranded RNA in the RNA interference (RNAi) pathway. Produces 21 to 25 bp dsRNAs (siRNAs) which target the selective destruction of homologous RNAs leading to sequence-specific suppression of gene expression, called post-transcriptional gene silencing (PTGS). Part of a broad host defense response against viral infection and transposons. This chain is Dicer-like protein 1 (dcl1), found in Aspergillus fumigatus (strain ATCC MYA-4609 / CBS 101355 / FGSC A1100 / Af293) (Neosartorya fumigata).